A 192-amino-acid polypeptide reads, in one-letter code: NAD(P)H-quinone oxidoreductase subunit J, organellar chromatophore (192 aa).

The protein belongs to the complex I 30 kDa subunit family. In terms of assembly, NDH is composed of at least 16 different subunits, 5 of which are encoded in the nucleus.

Its subcellular location is the plastid. It is found in the organellar chromatophore thylakoid membrane. It carries out the reaction a quinone + NADH + H(+) = a quinol + NAD(+). Its function is as follows. NDH-1 shuttles electrons from NADH, via FMN and iron-sulfur (Fe-S) centers, to quinones in the respiratory chain. Couples the redox reaction to proton translocation (for every two electrons transferred, four hydrogen ions are translocated across the cytoplasmic membrane), and thus conserves the redox energy in a proton gradient. The sequence is that of NAD(P)H-quinone oxidoreductase subunit J, organellar chromatophore from Paulinella chromatophora.